The primary structure comprises 396 residues: Probable sugar efflux transporter (396 aa).

Transmembrane regions (helical) follow at residues 15–35, 51–71, 84–104, 109–129, 137–157, 168–188, 209–229, 245–265, 273–293, 297–317, 333–353, and 365–385; these read VLIM…PVAM, GLMM…AMLA, LFII…FWIL, MCIA…VMRI, QALG…LPIG, VTFG…IRLL, PLLL…FTAY, NFAT…SLLF, PTKF…LLLF, TIIA…CIGL, VATA…ALFG, and IGYT…TTHL.

It belongs to the major facilitator superfamily. SotB (TC 2.A.1.2) family.

The protein resides in the cell inner membrane. In terms of biological role, involved in the efflux of sugars. The physiological role may be the reduction of the intracellular concentration of toxic sugars or sugar metabolites. The polypeptide is Probable sugar efflux transporter (Haemophilus influenzae (strain ATCC 51907 / DSM 11121 / KW20 / Rd)).